The following is a 248-amino-acid chain: Mannose-binding protein C (248 aa).

The N-terminal stretch at 1 to 20 (MSLFPSLPLLLLSMVAASYS) is a signal peptide. The Collagen-like domain maps to 42-99 (GINGFPGKDGRDGTKGEKGEPGQGLRGLQGPPGKLGPPGNPGPSGSPGAKGQKGDPGA). The disordered stretch occupies residues 43–112 (INGFPGKDGR…CDSSLANPER (70 aa)). Proline 47 carries the post-translational modification 4-hydroxyproline. Residues 49 to 61 (KDGRDGTKGEKGE) show a composition bias toward basic and acidic residues. Proline 73, proline 79, proline 82, and proline 88 each carry 4-hydroxyproline. Residues 112–130 (RKTLQTEINRIKKWVTFSL) adopt a coiled-coil conformation. The C-type lectin domain maps to 134 to 245 (VGKKLFLTNG…CSSSHLVICE (112 aa)). Intrachain disulfides connect cysteine 155/cysteine 244 and cysteine 222/cysteine 236.

As to quaternary structure, oligomeric complex of 3 or more homotrimers. Interacts with MASP1 and MASP2. Interacts with MEP1A and MEP1B and may inhibit their catalytic activity. In terms of processing, hydroxylation on proline residues within the sequence motif, GXPG, is most likely to be 4-hydroxy as this fits the requirement for 4-hydroxylation in vertebrates.

The protein localises to the secreted. In terms of biological role, calcium-dependent lectin involved in innate immune defense. Binds mannose, fucose and N-acetylglucosamine on different microorganisms and activates the lectin complement pathway. Binds to late apoptotic cells, as well as to apoptotic blebs and to necrotic cells, but not to early apoptotic cells, facilitating their uptake by macrophages. In Callithrix jacchus (White-tufted-ear marmoset), this protein is Mannose-binding protein C (MBL2).